A 334-amino-acid polypeptide reads, in one-letter code: MLNTLIVGASGYAGAELTAYLNRHPHMNITGLAVSAQSADAGKLLSDLHPQLKGILDLPLQPLVDVAQAAKGIDVVFLATAHEVSHDLAPQFLAAGCVVFDLSGAFRVRDAAFYSQYYGFEHQHPDWLDKAVYGLAEWQSEDIKQAQLIAVPGCYPTASQLALKPLVDGQLLNDAQWPVINAVSGVSGAGRKASMGNSFCEVSLQPYGLFTHRHQPEIVTHLGTPVIFTPHLGNFARGILATITCRLKAGVTAQNIADAYHHAYQNKPLVRLYQQGVPALKAVVGLPFCDIGFSVQGEHLIIVATEDNLLKGAAAQAVQCMNIRFGFPETQSLL.

Cys154 is a catalytic residue.

The protein belongs to the NAGSA dehydrogenase family. Type 1 subfamily.

It is found in the cytoplasm. The catalysed reaction is N-acetyl-L-glutamate 5-semialdehyde + phosphate + NADP(+) = N-acetyl-L-glutamyl 5-phosphate + NADPH + H(+). The protein operates within amino-acid biosynthesis; L-arginine biosynthesis; N(2)-acetyl-L-ornithine from L-glutamate: step 3/4. Catalyzes the NADPH-dependent reduction of N-acetyl-5-glutamyl phosphate to yield N-acetyl-L-glutamate 5-semialdehyde. The protein is N-acetyl-gamma-glutamyl-phosphate reductase of Yersinia pestis.